A 336-amino-acid chain; its full sequence is F420-dependent glucose-6-phosphate dehydrogenase (336 aa).

Aspartate 37 serves as a coordination point for coenzyme F420-(gamma-Glu)n. The active-site Proton donor is the histidine 38. Coenzyme F420-(gamma-Glu)n contacts are provided by residues threonine 74 and 105 to 106; that span reads SG. Glutamate 107 functions as the Proton acceptor in the catalytic mechanism. Residues asparagine 110, 173-174, and 176-177 contribute to the coenzyme F420-(gamma-Glu)n site; these read SG and SA. 4 residues coordinate substrate: threonine 191, lysine 194, lysine 255, and arginine 279.

This sequence belongs to the F420-dependent glucose-6-phosphate dehydrogenase family. Homodimer.

It carries out the reaction oxidized coenzyme F420-(gamma-L-Glu)(n) + D-glucose 6-phosphate + H(+) = 6-phospho-D-glucono-1,5-lactone + reduced coenzyme F420-(gamma-L-Glu)(n). Catalyzes the coenzyme F420-dependent oxidation of glucose 6-phosphate (G6P) to 6-phosphogluconolactone. This Beutenbergia cavernae (strain ATCC BAA-8 / DSM 12333 / CCUG 43141 / JCM 11478 / NBRC 16432 / NCIMB 13614 / HKI 0122) protein is F420-dependent glucose-6-phosphate dehydrogenase.